Here is a 259-residue protein sequence, read N- to C-terminus: Energy-coupling factor transporter ATP-binding protein EcfA1 (259 aa).

Residues 3-230 (ITLNSVSFRY…EFDDVEIPFK (228 aa)) form the ABC transporter domain. An ATP-binding site is contributed by 38 to 43 (GSGKTT). E157 functions as the Proton acceptor in the catalytic mechanism.

Belongs to the ABC transporter superfamily. Energy-coupling factor EcfA family. In terms of assembly, forms a heterodimer with EcfA2. Forms a stable energy-coupling factor (ECF) transporter complex composed of 2 membrane-embedded substrate-binding proteins (S component, RibU, BioY), 2 ATP-binding proteins (A component) and 2 transmembrane proteins (T component) upon coexpression in E.coli. Stable subcomplexes with both A plus T components can also be isolated. This complex interacts with at least 2 substrate-specific components, BioY and RibU.

Its subcellular location is the cell inner membrane. In terms of biological role, ATP-binding (A) component of a common energy-coupling factor (ECF) ABC-transporter complex. Unlike classic ABC transporters this ECF transporter provides the energy necessary to transport a number of different substrates. Expression of the complex plus RibU in E.coli allows riboflavin uptake; uptake does not occur in the absence of RibU or the EcfA1A2T complex. This is Energy-coupling factor transporter ATP-binding protein EcfA1 from Thermotoga maritima (strain ATCC 43589 / DSM 3109 / JCM 10099 / NBRC 100826 / MSB8).